The chain runs to 282 residues: Pantothenate synthetase (282 aa).

Met26 to His33 contributes to the ATP binding site. The active-site Proton donor is the His33. Gln57 serves as a coordination point for (R)-pantoate. Gln57 is a binding site for beta-alanine. Gly144–Asp147 contacts ATP. Gln150 contacts (R)-pantoate. ATP contacts are provided by residues Val173 and Leu181–Arg184.

Belongs to the pantothenate synthetase family. In terms of assembly, homodimer.

It is found in the cytoplasm. It catalyses the reaction (R)-pantoate + beta-alanine + ATP = (R)-pantothenate + AMP + diphosphate + H(+). The protein operates within cofactor biosynthesis; (R)-pantothenate biosynthesis; (R)-pantothenate from (R)-pantoate and beta-alanine: step 1/1. Its function is as follows. Catalyzes the condensation of pantoate with beta-alanine in an ATP-dependent reaction via a pantoyl-adenylate intermediate. This chain is Pantothenate synthetase, found in Cupriavidus taiwanensis (strain DSM 17343 / BCRC 17206 / CCUG 44338 / CIP 107171 / LMG 19424 / R1) (Ralstonia taiwanensis (strain LMG 19424)).